The following is a 2192-amino-acid chain: Non-reducing polyketide synthase 1 (2192 aa).

An N-terminal acylcarrier protein transacylase domain (SAT) region spans residues L5–H243. A Ketosynthase family 3 (KS3) domain is found at N374 to D806. Residues C546, H681, and H724 each act as for beta-ketoacyl synthase activity in the active site. The interval F905 to A1218 is malonyl-CoA:ACP transacylase (MAT) domain. The For acyl/malonyl transferase activity role is filled by S993. Positions S1293–P1610 are product template (PT) domain. The segment at Q1295–T1430 is N-terminal hotdog fold. The 311-residue stretch at Q1295–N1605 folds into the PKS/mFAS DH domain. H1327 functions as the Proton acceptor; for dehydratase activity in the catalytic mechanism. A C-terminal hotdog fold region spans residues A1458 to N1605. D1518 serves as the catalytic Proton donor; for dehydratase activity. Residues T1639–K1668 form a disordered region. The Carrier 1 domain occupies P1670–D1747. S1707 bears the O-(pantetheine 4'-phosphoryl)serine mark. The disordered stretch occupies residues G1748–E1788. Residues E1754 to T1764 are compositionally biased toward acidic residues. Residues A1798–P1875 form the Carrier 2 domain. An O-(pantetheine 4'-phosphoryl)serine modification is found at S1835. Residues S1913 to I2164 are thioesterase (TE) domain.

Non-reducing polyketide synthase; part of the gene cluster that mediates the biosynthesis of elsinochromes, pigments consisting of at least four interconvertible tautomers (A, B, C and D) that have a core phenolic quinone to which various side chains are attached and which play an important role in fungal pathogenesis. The non-reducing polyketide synthase PKS1 was proposed to iteratively catalyze decarboxylation between acetyl-CoA and malonyl-CoA subunits for polyketide chain elongation. The released polyketide undergoes cyclization to form an aromatic ring, and proceeds via serial modification steps to produce the heptaketide back- bone of elsinochrome. As elsinochrome has a symmetrical structure, two identical heptaketides are fused to form a core 1,2-dihydrobenzo-perylene ring structure, which can then be successively modified to produce the various derivatives of elsinochrome. Some of these reactions may be cooperatively carried out, at least in part, by the products of RDT1, OXR1 and PKS1. PRF1, embedded within the elsinochrome cluster possibly functions to stabilize some of the biosynthetic enzymes required for elsinochrome production. As prefoldin is a hexamer containing 2 a and 4 b subunits, additional prefoldin subunits, whose coding genes may not immediately link to the elsinochrome biosynthetic gene cluster, are required to fulfill the chaperone function. In addition, no methyltransferase-coding gene exists within the biosynthetic gene cluster, even though elsinochrome has four methyl groups at positions C3, C7, C8 and C12. Apparently, the identified gene cluster does not contain the entire entourage of genes responsible for elsinochrome biosynthesis. Once elsinochrome is synthesized, it must be exported outside the fungal cells, which is probably accomplished by the ECT1 transporter, to avoid toxicity. The polypeptide is Non-reducing polyketide synthase 1 (Elsinoe fawcettii (Citrus scab fungus)).